The chain runs to 771 residues: U-box domain-containing protein 6 (771 aa).

The U-box domain maps to 274-348; the sequence is IPPEELRCPI…ASWCEQNGIT (75 aa). Residues 394–415 are disordered; the sequence is EESSTIESERQQKEKNNAPDEV. Residues 400–411 are compositionally biased toward basic and acidic residues; the sequence is ESERQQKEKNNA. ARM repeat units lie at residues 456 to 499, 502 to 542, 544 to 581, 583 to 622, and 625 to 664; these read EEAR…NLAV, NRNK…CLEK, KPVI…NLST, SPNI…NLAS, and EGKE…ILCT. Positions 706 to 722 are enriched in basic and acidic residues; the sequence is EQRHRDQPSPNKEEAPR. Residues 706–751 form a disordered region; the sequence is EQRHRDQPSPNKEEAPRKTVSAPMAIPAPVSAPESEVKPLTKSISR.

The catalysed reaction is S-ubiquitinyl-[E2 ubiquitin-conjugating enzyme]-L-cysteine + [acceptor protein]-L-lysine = [E2 ubiquitin-conjugating enzyme]-L-cysteine + N(6)-ubiquitinyl-[acceptor protein]-L-lysine.. The protein operates within protein modification; protein ubiquitination. Functionally, functions as an E3 ubiquitin ligase. The polypeptide is U-box domain-containing protein 6 (PUB6) (Arabidopsis thaliana (Mouse-ear cress)).